A 281-amino-acid polypeptide reads, in one-letter code: Lipoyl synthase (281 aa).

7 residues coordinate [4Fe-4S] cluster: cysteine 35, cysteine 40, cysteine 46, cysteine 61, cysteine 65, cysteine 68, and serine 274. The region spanning 47-263 is the Radical SAM core domain; it reads FGCGQATFLI…RDEALALGFR (217 aa).

This sequence belongs to the radical SAM superfamily. Lipoyl synthase family. The cofactor is [4Fe-4S] cluster.

The protein resides in the cytoplasm. It carries out the reaction [[Fe-S] cluster scaffold protein carrying a second [4Fe-4S](2+) cluster] + N(6)-octanoyl-L-lysyl-[protein] + 2 oxidized [2Fe-2S]-[ferredoxin] + 2 S-adenosyl-L-methionine + 4 H(+) = [[Fe-S] cluster scaffold protein] + N(6)-[(R)-dihydrolipoyl]-L-lysyl-[protein] + 4 Fe(3+) + 2 hydrogen sulfide + 2 5'-deoxyadenosine + 2 L-methionine + 2 reduced [2Fe-2S]-[ferredoxin]. It participates in protein modification; protein lipoylation via endogenous pathway; protein N(6)-(lipoyl)lysine from octanoyl-[acyl-carrier-protein]: step 2/2. Functionally, catalyzes the radical-mediated insertion of two sulfur atoms into the C-6 and C-8 positions of the octanoyl moiety bound to the lipoyl domains of lipoate-dependent enzymes, thereby converting the octanoylated domains into lipoylated derivatives. This Trichlorobacter lovleyi (strain ATCC BAA-1151 / DSM 17278 / SZ) (Geobacter lovleyi) protein is Lipoyl synthase.